The following is a 258-amino-acid chain: Imidazole glycerol phosphate synthase subunit HisF (258 aa).

Active-site residues include aspartate 11 and aspartate 130.

The protein belongs to the HisA/HisF family. As to quaternary structure, heterodimer of HisH and HisF.

The protein localises to the cytoplasm. The catalysed reaction is 5-[(5-phospho-1-deoxy-D-ribulos-1-ylimino)methylamino]-1-(5-phospho-beta-D-ribosyl)imidazole-4-carboxamide + L-glutamine = D-erythro-1-(imidazol-4-yl)glycerol 3-phosphate + 5-amino-1-(5-phospho-beta-D-ribosyl)imidazole-4-carboxamide + L-glutamate + H(+). It functions in the pathway amino-acid biosynthesis; L-histidine biosynthesis; L-histidine from 5-phospho-alpha-D-ribose 1-diphosphate: step 5/9. Functionally, IGPS catalyzes the conversion of PRFAR and glutamine to IGP, AICAR and glutamate. The HisF subunit catalyzes the cyclization activity that produces IGP and AICAR from PRFAR using the ammonia provided by the HisH subunit. This Rhodospirillum centenum (strain ATCC 51521 / SW) protein is Imidazole glycerol phosphate synthase subunit HisF.